A 753-amino-acid polypeptide reads, in one-letter code: 5-methyltetrahydropteroyltriglutamate--homocysteine methyltransferase (753 aa).

Residues 17 to 20 and lysine 117 each bind 5-methyltetrahydropteroyltri-L-glutamate; that span reads RELK. L-homocysteine contacts are provided by residues 431–433 and glutamate 484; that span reads IGS. L-methionine-binding positions include 431-433 and glutamate 484; that span reads IGS. 5-methyltetrahydropteroyltri-L-glutamate contacts are provided by residues 515 to 516 and tryptophan 561; that span reads RC. Aspartate 599 is a binding site for L-homocysteine. Aspartate 599 lines the L-methionine pocket. Glutamate 605 is a binding site for 5-methyltetrahydropteroyltri-L-glutamate. Residues histidine 641, cysteine 643, and glutamate 665 each contribute to the Zn(2+) site. The active-site Proton donor is the histidine 694. Cysteine 726 contributes to the Zn(2+) binding site.

This sequence belongs to the vitamin-B12 independent methionine synthase family. Zn(2+) is required as a cofactor.

The catalysed reaction is 5-methyltetrahydropteroyltri-L-glutamate + L-homocysteine = tetrahydropteroyltri-L-glutamate + L-methionine. Its pathway is amino-acid biosynthesis; L-methionine biosynthesis via de novo pathway; L-methionine from L-homocysteine (MetE route): step 1/1. In terms of biological role, catalyzes the transfer of a methyl group from 5-methyltetrahydrofolate to homocysteine resulting in methionine formation. This Escherichia coli O1:K1 / APEC protein is 5-methyltetrahydropteroyltriglutamate--homocysteine methyltransferase.